Reading from the N-terminus, the 497-residue chain is Signal recognition particle subunit SRP54 2 (497 aa).

Residues 1 to 295 (MVLAQLGGSI…DVKPFVSRLL (295 aa)) form a G-domain region. GTP contacts are provided by residues 108–115 (GLQGSGKT), 190–194 (DTSGR), and 248–251 (TKLD). The interval 296–497 (GMGDLSGLMD…MLGGMGLGGD (202 aa)) is M-domain.

It belongs to the GTP-binding SRP family. SRP54 subfamily. Component of a signal recognition particle (SRP) complex that consists of a 7SL RNA molecule of 300 nucleotides and six protein subunits: SRP72, SRP68, SRP54, SRP19, SRP14 and SRP9.

The protein localises to the cytoplasm. The protein resides in the endoplasmic reticulum. The catalysed reaction is GTP + H2O = GDP + phosphate + H(+). Component of the signal recognition particle (SRP) complex, a ribonucleoprotein complex that mediates the cotranslational targeting of secretory and membrane proteins to the endoplasmic reticulum (ER). As part of the SRP complex, associates with the SRP receptor (SR) component SRPRA to target secretory proteins to the endoplasmic reticulum membrane. Binds to the signal sequence of presecretory proteins when they emerge from the ribosomes. Displays basal GTPase activity, and stimulates reciprocal GTPase activation of the SR subunit SRPRA. Forms a guanosine 5'-triphosphate (GTP)-dependent complex with the SR subunit SRPRA. SR compaction and GTPase mediated rearrangement of SR drive SRP-mediated cotranslational protein translocation into the ER. Requires the presence of SRP9/SRP14 and/or SRP19 to stably interact with RNA. The sequence is that of Signal recognition particle subunit SRP54 2 (SRP54-2) from Hordeum vulgare (Barley).